The following is a 37-amino-acid chain: Delta/kappa-conotoxin Mo3964 (37 aa).

Cystine bridges form between Cys-4–Cys-12, Cys-11–Cys-27, and Cys-21–Cys-34.

As to expression, expressed by the venom duct.

Its subcellular location is the secreted. Its function is as follows. This toxin reduces the outward currents that are due to the opening of voltage-gated potassium channels in DRG neurons. In addition, leftward shift in the presence of this toxin is observed in averaged normalized conductance-voltage plot of outward sodium currents (Nav1.2/SCN2A). The protein is Delta/kappa-conotoxin Mo3964 of Conus monile (Necklace cone).